The primary structure comprises 837 residues: Endo-1,4-beta-xylanase Z (837 aa).

Residues 1 to 28 form the signal peptide; the sequence is MSRKLFSVLLVGLMLMTSLLVTISSTSA. The 122-residue stretch at 299–420 folds into the CBM6 domain; it reads TRIEAEDYDG…PVNIDWFTFG (122 aa). One can recognise a Dockerin domain in the interval 424–492; it reads SSTGLGDLNG…ILRIITEFPG (69 aa). A GH10 domain is found at 512-833; sequence TISGNALRDY…KPAYNAIKEA (322 aa). Catalysis depends on Glu-645, which acts as the Proton donor. Glu-754 serves as the catalytic Nucleophile. An intrachain disulfide couples Cys-783 to Cys-789.

Belongs to the glycosyl hydrolase 10 (cellulase F) family.

The catalysed reaction is Endohydrolysis of (1-&gt;4)-beta-D-xylosidic linkages in xylans.. The chain is Endo-1,4-beta-xylanase Z (xynZ) from Acetivibrio thermocellus (strain ATCC 27405 / DSM 1237 / JCM 9322 / NBRC 103400 / NCIMB 10682 / NRRL B-4536 / VPI 7372) (Clostridium thermocellum).